A 427-amino-acid chain; its full sequence is Clusterin-associated protein 1 homolog (427 aa).

Residues 202 to 307 (LLNNVSSDEA…LKEEEKRLMR (106 aa)) adopt a coiled-coil conformation. Residues 300–313 (EEEKRLMRSGVARD) are compositionally biased toward basic and acidic residues. The disordered stretch occupies residues 300-427 (EEEKRLMRSG…QILEESDNDF (128 aa)). Acidic residues-rich tracts occupy residues 314–332 (EDSD…DIDD) and 363–400 (SEET…DNDS).

It belongs to the CLUAP1 family.

The protein localises to the nucleus. It localises to the cell projection. Its subcellular location is the cilium. In terms of biological role, required for cilia biogenesis and maintenance in the kidney, the lateral line organ and eye. Appears to function within the multiple intraflagellar transport complex B (IFT-B). The protein is Clusterin-associated protein 1 homolog (cluap1) of Danio rerio (Zebrafish).